Reading from the N-terminus, the 96-residue chain is UPF0235 protein ESA_00387 (96 aa).

It belongs to the UPF0235 family.

The sequence is that of UPF0235 protein ESA_00387 from Cronobacter sakazakii (strain ATCC BAA-894) (Enterobacter sakazakii).